The sequence spans 152 residues: Deoxyuridine 5'-triphosphate nucleotidohydrolase (152 aa).

Substrate is bound by residues 71–73 (RSG), Asn-84, 88–90 (LID), and Met-98.

Belongs to the dUTPase family. The cofactor is Mg(2+).

The catalysed reaction is dUTP + H2O = dUMP + diphosphate + H(+). Its pathway is pyrimidine metabolism; dUMP biosynthesis; dUMP from dCTP (dUTP route): step 2/2. Functionally, this enzyme is involved in nucleotide metabolism: it produces dUMP, the immediate precursor of thymidine nucleotides and it decreases the intracellular concentration of dUTP so that uracil cannot be incorporated into DNA. The chain is Deoxyuridine 5'-triphosphate nucleotidohydrolase from Coxiella burnetii (strain RSA 331 / Henzerling II).